A 419-amino-acid chain; its full sequence is Protein phosphatase methylesterase 1 (419 aa).

Residues 1–12 are compositionally biased toward basic residues; sequence MSQLHRGMHKKP. The interval 1–75 is disordered; the sequence is MSQLHRGMHK…KSAASPTVPA (75 aa). The segment covering 32-52 has biased composition (acidic residues); sequence TETEETVECTEEEEEQDETDG. Catalysis depends on residues Ser-230, Asp-256, and His-383.

It belongs to the AB hydrolase superfamily.

The catalysed reaction is [phosphatase 2A protein]-C-terminal L-leucine methyl ester + H2O = [phosphatase 2A protein]-C-terminal L-leucine + methanol + H(+). Functionally, demethylates proteins that have been reversibly carboxymethylated. Demethylates the phosphatase PP2A catalytic subunit. In Yarrowia lipolytica (strain CLIB 122 / E 150) (Yeast), this protein is Protein phosphatase methylesterase 1 (PPE1).